The chain runs to 35 residues: Photosystem II reaction center protein T (35 aa).

A helical transmembrane segment spans residues 3–23 (ALVYTFLLXSTLGIIFFAIFF).

The protein belongs to the PsbT family. In terms of assembly, PSII is composed of 1 copy each of membrane proteins PsbA, PsbB, PsbC, PsbD, PsbE, PsbF, PsbH, PsbI, PsbJ, PsbK, PsbL, PsbM, PsbT, PsbY, PsbZ, Psb30/Ycf12, at least 3 peripheral proteins of the oxygen-evolving complex and a large number of cofactors. It forms dimeric complexes.

The protein resides in the plastid. It localises to the chloroplast thylakoid membrane. Found at the monomer-monomer interface of the photosystem II (PS II) dimer, plays a role in assembly and dimerization of PSII. PSII is a light-driven water plastoquinone oxidoreductase, using light energy to abstract electrons from H(2)O, generating a proton gradient subsequently used for ATP formation. This is Photosystem II reaction center protein T from Cunninghamia lanceolata (China fir).